Reading from the N-terminus, the 98-residue chain is Small ribosomal subunit protein bS6 (98 aa).

It belongs to the bacterial ribosomal protein bS6 family.

Binds together with bS18 to 16S ribosomal RNA. The polypeptide is Small ribosomal subunit protein bS6 (Lactobacillus helveticus (strain DPC 4571)).